The primary structure comprises 179 residues: Large ribosomal subunit protein uL5 (179 aa).

This sequence belongs to the universal ribosomal protein uL5 family. As to quaternary structure, part of the 50S ribosomal subunit; part of the 5S rRNA/L5/L18/L25 subcomplex. Contacts the 5S rRNA and the P site tRNA. Forms a bridge to the 30S subunit in the 70S ribosome.

In terms of biological role, this is one of the proteins that bind and probably mediate the attachment of the 5S RNA into the large ribosomal subunit, where it forms part of the central protuberance. In the 70S ribosome it contacts protein S13 of the 30S subunit (bridge B1b), connecting the 2 subunits; this bridge is implicated in subunit movement. Contacts the P site tRNA; the 5S rRNA and some of its associated proteins might help stabilize positioning of ribosome-bound tRNAs. In Herpetosiphon aurantiacus (strain ATCC 23779 / DSM 785 / 114-95), this protein is Large ribosomal subunit protein uL5.